Reading from the N-terminus, the 288-residue chain is Sulfur carrier protein FdhD (288 aa).

C122 (cysteine persulfide intermediate) is an active-site residue. 268 to 273 (FVRGER) is a binding site for Mo-bis(molybdopterin guanine dinucleotide).

It belongs to the FdhD family.

It localises to the cytoplasm. Functionally, required for formate dehydrogenase (FDH) activity. Acts as a sulfur carrier protein that transfers sulfur from IscS to the molybdenum cofactor prior to its insertion into FDH. The protein is Sulfur carrier protein FdhD of Anaeromyxobacter sp. (strain K).